The sequence spans 135 residues: ATP synthase epsilon chain (135 aa).

This sequence belongs to the ATPase epsilon chain family. In terms of assembly, F-type ATPases have 2 components, CF(1) - the catalytic core - and CF(0) - the membrane proton channel. CF(1) has five subunits: alpha(3), beta(3), gamma(1), delta(1), epsilon(1). CF(0) has three main subunits: a, b and c.

It is found in the cell inner membrane. Its function is as follows. Produces ATP from ADP in the presence of a proton gradient across the membrane. In Nitrobacter winogradskyi (strain ATCC 25391 / DSM 10237 / CIP 104748 / NCIMB 11846 / Nb-255), this protein is ATP synthase epsilon chain.